The following is a 111-amino-acid chain: uncharacterized protein (111 aa).

Helical transmembrane passes span 7 to 29 and 49 to 71; these read LYSS…RALY and PSLL…SINL.

It localises to the membrane. This is an uncharacterized protein from Saccharomyces cerevisiae (strain ATCC 204508 / S288c) (Baker's yeast).